The chain runs to 221 residues: Guanylate kinase (221 aa).

In terms of domain architecture, Guanylate kinase-like spans 18–196; the sequence is GFLFILSSPS…SASLIKSIYL (179 aa). 25–32 is an ATP binding site; sequence SPSGAGKS.

Belongs to the guanylate kinase family.

It localises to the cytoplasm. The enzyme catalyses GMP + ATP = GDP + ADP. Functionally, essential for recycling GMP and indirectly, cGMP. The polypeptide is Guanylate kinase (Bartonella quintana (strain Toulouse) (Rochalimaea quintana)).